A 669-amino-acid chain; its full sequence is Translation factor GUF1, mitochondrial (669 aa).

Residues 1–49 constitute a mitochondrion transit peptide; the sequence is MWTLAGQGWWRGRALAAWVTEAARKGLLWPHLAPARGTAAESRAPDRCY. In terms of domain architecture, tr-type G spans 66–247; the sequence is ENTRNFSIIA…AVIKRIPFPK (182 aa). GTP is bound by residues 75–82, 140–144, and 194–197; these read AHVDHGKS, DTPGH, and NKID.

Belongs to the TRAFAC class translation factor GTPase superfamily. Classic translation factor GTPase family. LepA subfamily.

The protein resides in the mitochondrion inner membrane. The catalysed reaction is GTP + H2O = GDP + phosphate + H(+). Promotes mitochondrial protein synthesis. May act as a fidelity factor of the translation reaction, by catalyzing a one-codon backward translocation of tRNAs on improperly translocated ribosomes. Binds to mitochondrial ribosomes in a GTP-dependent manner. The protein is Translation factor GUF1, mitochondrial of Bos taurus (Bovine).